A 440-amino-acid chain; its full sequence is MSYFEHIPAIRYEGPQSDNPLAYHHYDPDKRVLGKTLAEHLRIAVCYWHTFVWPGHDIFGQGAFQRPWQQPGDALERARQKADAAFEFFTKLGTPFYTFHDTDVAPEGDSLRDYAANFARMVDYLGERQHASGVRLLWGTANLFSHPRFAAGAATNPNPDVFAWAATQVCHALDATHRLGGENYVLWGGREGYETLLNTDLKRERDQFARFLSMVVEHKHRIGFKGALLIEPKPQEPTKHQYDYDVATVHGFLVQYGLQNEIRVNIEANHATLAGHSFHHEIANAFALGVFGSVDANRGDPQNGWDTDQFPNSVEELTLAFYEILRHGGFTTGGMNFDAKVRRQSIDPEDLFYGHVGAIDVLALALERAAVLVENDRLDALRRQRYAQWDDAFGRKILSGGYTLESLAADALARGVNPRHASGAQERLENIVNQAIYGLR.

Residues histidine 100 and aspartate 103 contribute to the active site. Mg(2+)-binding residues include glutamate 231, glutamate 267, histidine 270, aspartate 295, aspartate 306, aspartate 308, and aspartate 338.

It belongs to the xylose isomerase family. Homotetramer. It depends on Mg(2+) as a cofactor.

The protein resides in the cytoplasm. The catalysed reaction is alpha-D-xylose = alpha-D-xylulofuranose. The sequence is that of Xylose isomerase from Burkholderia orbicola (strain MC0-3).